An 82-amino-acid polypeptide reads, in one-letter code: Small ribosomal subunit protein bS16 (82 aa).

The protein belongs to the bacterial ribosomal protein bS16 family.

This is Small ribosomal subunit protein bS16 from Shigella boydii serotype 18 (strain CDC 3083-94 / BS512).